We begin with the raw amino-acid sequence, 66 residues long: Large ribosomal subunit protein bL35 (66 aa).

Basic residues predominate over residues 1-28; the sequence is MPKMKTHRGSAKRFKRTGSGKLKRRHGF. Residues 1 to 50 are disordered; it reads MPKMKTHRGSAKRFKRTGSGKLKRRHGFTSHMFANKSQKQKRKLRKSAMV.

It belongs to the bacterial ribosomal protein bL35 family.

The polypeptide is Large ribosomal subunit protein bL35 (Listeria monocytogenes serotype 4a (strain HCC23)).